We begin with the raw amino-acid sequence, 265 residues long: Non-seed lectin (265 aa).

The or 23 signal peptide spans 1–21 (MALYRTKELVSLVSIMFVLLA). N-linked (GlcNAc...) asparagine glycans are attached at residues N59 and N127.

It belongs to the leguminous lectin family. In terms of assembly, monomer. As to expression, most highly expressed in the epidermal layer of developing shoot tips.

This chain is Non-seed lectin, found in Pisum sativum (Garden pea).